The primary structure comprises 126 residues: Urease subunit beta (126 aa).

It belongs to the urease beta subunit family. As to quaternary structure, heterotrimer of UreA (gamma), UreB (beta) and UreC (alpha) subunits. Three heterotrimers associate to form the active enzyme.

It localises to the cytoplasm. The catalysed reaction is urea + 2 H2O + H(+) = hydrogencarbonate + 2 NH4(+). It functions in the pathway nitrogen metabolism; urea degradation; CO(2) and NH(3) from urea (urease route): step 1/1. This is Urease subunit beta from Haloquadratum walsbyi (strain DSM 16790 / HBSQ001).